Reading from the N-terminus, the 261-residue chain is uncharacterized protein (261 aa).

Aspartate 43, histidine 45, aspartate 75, asparagine 106, histidine 197, and histidine 199 together coordinate a divalent metal cation.

Belongs to the metallophosphoesterase superfamily. Requires a divalent metal cation as cofactor.

This is an uncharacterized protein from Aquifex aeolicus (strain VF5).